The chain runs to 547 residues: MFS-type transporter ltbE (547 aa).

The segment at 1 to 23 (MEIAAETTGPAGVTTDVTNAEES) is disordered. 13 consecutive transmembrane segments (helical) span residues 33-53 (QGWALASLTVAFMSICLVLAI), 74-94 (DIGWYGSSYLIAQMALLPTCG), 104-124 (WVYCLSLAIFELGSIIAAVAP), 135-155 (ISGLGAAGLVSGTTTILSYCV), 165-185 (PIVLGMYNIGSAMGPLIGGSI), 195-215 (FIFWINLPFGAVALVLVWFTL), 240-260 (ATLLLGATTCLNLALQWGGIV), 267-287 (KVFGCLIGFGLLLITFLCLQW), 310-330 (GFMMLVQVAIVVQSYFWPIYF), 343-363 (INLLPLIISNSLSTLCAGSLA), 370-390 (VPFMWVGPLILATGGGLYQLV), 399-419 (WIGFQILSGVGYGCCSQMPIL), and 432-452 (TGLVMIMFFQMLGGALAPSVG). N-linked (GlcNAc...) asparagine glycosylation occurs at asparagine 463. A helical transmembrane segment spans residues 506-526 (VFWVGVATPALAWIASWAMEW).

Belongs to the major facilitator superfamily. TCR/Tet family.

It is found in the cell membrane. Its function is as follows. MFS-type transporter; part of the gene cluster that mediates the biosynthesis of luteodienoside A, a glycosylated polyketide consisting of an unusual 1-O-beta-D-glucopyranosyl-myo-inositol (glucinol) ester of 3-hydroxy-2,2,4-trimethylocta-4,6-dienoic acid. LtbE is probably involved in the secretion of luteodienoside A. This is MFS-type transporter ltbE from Aspergillus luteorubrus.